The sequence spans 591 residues: DEAD-box ATP-dependent RNA helicase 17 (591 aa).

Positions 23 to 52 (CSFTDLGLHPTLCAHLQDKMGFQAPTRIQA) match the Q motif motif. Residues 55 to 248 (IPVAMSGQHM…KISLKNPVMI (194 aa)) enclose the Helicase ATP-binding domain. Position 68–75 (68–75 (AATGTGKT)) interacts with ATP. Positions 181-184 (DEAD) match the DEAD box motif. One can recognise a Helicase C-terminal domain in the interval 293 to 482 (QLVQRYVKVS…SFPVNGQRLH (190 aa)). Positions 562–591 (GRSHQVQLKKRKKEQKRERPAKRRKIPAKR) are disordered. A compositionally biased stretch (basic residues) spans 568–591 (QLKKRKKEQKRERPAKRRKIPAKR).

The protein belongs to the DEAD box helicase family. DDX31/DBP7 subfamily. As to expression, expressed in flowers and pollen grains.

The protein resides in the nucleus. It catalyses the reaction ATP + H2O = ADP + phosphate + H(+). Its function is as follows. May play a role in organellar ribosome biogenesis and suppress 16S rRNA maturation. This chain is DEAD-box ATP-dependent RNA helicase 17, found in Oryza sativa subsp. japonica (Rice).